Consider the following 423-residue polypeptide: Phosphoribosylamine--glycine ligase (423 aa).

The ATP-grasp domain occupies 107-314 (KAFMAKYNIP…LSDLVEAAID (208 aa)). Residue 133–194 (VNQKGAPIVI…EDFLQGEEAS (62 aa)) participates in ATP binding. 2 residues coordinate Mg(2+): Glu284 and Asn286.

It belongs to the GARS family. Mg(2+) is required as a cofactor. Mn(2+) serves as cofactor.

The catalysed reaction is 5-phospho-beta-D-ribosylamine + glycine + ATP = N(1)-(5-phospho-beta-D-ribosyl)glycinamide + ADP + phosphate + H(+). Its pathway is purine metabolism; IMP biosynthesis via de novo pathway; N(1)-(5-phospho-D-ribosyl)glycinamide from 5-phospho-alpha-D-ribose 1-diphosphate: step 2/2. The chain is Phosphoribosylamine--glycine ligase from Neisseria meningitidis serogroup B (strain ATCC BAA-335 / MC58).